A 140-amino-acid polypeptide reads, in one-letter code: Baculoviral IAP repeat-containing protein 5 (140 aa).

Residues Arg18–Thr88 form a BIR repeat. Lys23 carries the N6-acetyllysine modification. Residue Thr34 is modified to Phosphothreonine; by CDK1 and CDK15. Thr48 is modified (phosphothreonine). The Zn(2+) site is built by Cys57, Cys60, Glu76, His77, His80, and Cys84. Lys90, Lys110, Lys112, and Lys115 each carry N6-acetyllysine. Residues Ile113 to Lys129 show a composition bias toward basic and acidic residues. Positions Ile113–Ala140 are disordered. Thr117 bears the Phosphothreonine; by AURKB mark. Lys129 is modified (N6-acetyllysine). Residues Thr130 to Ala140 are compositionally biased toward polar residues.

Belongs to the IAP family. In terms of assembly, monomer or homodimer. Exists as a homodimer in the apo state and as a monomer in the CPC-bound state. The monomer protects cells against apoptosis more efficiently than the dimer. Only the dimeric form is capable of enhancing tubulin stability in cells. When phosphorylated, interacts with LAMTOR5/HBXIP; the resulting complex binds pro-CASP9, as well as active CASP9, but much less efficiently. Component of the chromosomal passenger complex (CPC) composed of at least BIRC5/survivin, CDCA8/borealin, INCENP, AURKB or AURKC; in the complex forms a triple-helix bundle-based subcomplex with INCENP and CDCA8. Interacts with JTB. Interacts (via BIR domain) with histone H3 phosphorylated at 'Thr-3' (H3pT3). Interacts with EVI5. Interacts with GTP-bound RAN in both the S and M phases of the cell cycle. Interacts with USP9X. Interacts with tubulin. Interacts with BIRC2/c-IAP1. The acetylated form at Lys-129 interacts with STAT3. The monomeric form deacetylated at Lys-129 interacts with XPO1/CRM1. The monomeric form interacts with XIAP/BIRC4. Both the dimeric and monomeric form can interact with DIABLO/SMAC. Interacts with BIRC6/bruce. Interacts with FBXL7; this interaction facilitates the polyubiquitination and subsequent proteasomal degradation of BIRC5 by the SCF(FBXL7) E3 ubiquitin-protein ligase complex. Ubiquitinated by the Cul9-RING ubiquitin-protein ligase complex, leading to its degradation. Ubiquitination is required for centrosomal targeting. Deubiquitinated by USP35 or USP38; leading to stabilization. Post-translationally, acetylation at Lys-129 results in its homodimerization, while deacetylation promotes the formation of monomers which heterodimerize with XPO1/CRM1 which facilitates its nuclear export. The acetylated form represses STAT3 transactivation. The dynamic equilibrium between its acetylation and deacetylation at Lys-129 determines its interaction with XPO1/CRM1, its subsequent subcellular localization, and its ability to inhibit STAT3 transactivation. In terms of processing, in vitro phosphorylation at Thr-117 by AURKB prevents interaction with INCENP and localization to mitotic chromosomes. Phosphorylation at Thr-48 by CK2 is critical for its mitotic and anti-apoptotic activities. Phosphorylation at Thr-34 by CDK15 is critical for its anti-apoptotic activity.

The protein resides in the cytoplasm. It localises to the nucleus. It is found in the chromosome. The protein localises to the centromere. Its subcellular location is the cytoskeleton. The protein resides in the spindle. It localises to the kinetochore. It is found in the midbody. Multitasking protein that has dual roles in promoting cell proliferation and preventing apoptosis. Component of a chromosome passage protein complex (CPC) which is essential for chromosome alignment and segregation during mitosis and cytokinesis. Acts as an important regulator of the localization of this complex; directs CPC movement to different locations from the inner centromere during prometaphase to midbody during cytokinesis and participates in the organization of the center spindle by associating with polymerized microtubules. Involved in the recruitment of CPC to centromeres during early mitosis via association with histone H3 phosphorylated at 'Thr-3' (H3pT3) during mitosis. The complex with RAN plays a role in mitotic spindle formation by serving as a physical scaffold to help deliver the RAN effector molecule TPX2 to microtubules. May counteract a default induction of apoptosis in G2/M phase. The acetylated form represses STAT3 transactivation of target gene promoters. May play a role in neoplasia. Inhibitor of CASP3 and CASP7. Essential for the maintenance of mitochondrial integrity and function. The polypeptide is Baculoviral IAP repeat-containing protein 5 (Birc5) (Mus musculus (Mouse)).